We begin with the raw amino-acid sequence, 239 residues long: Caffeoyl-CoA O-methyltransferase 1 (239 aa).

Lys13 serves as a coordination point for substrate. S-adenosyl-L-methionine contacts are provided by residues Thr55, Glu77, 79 to 80, Ser85, Asp103, and Ala132; that span reads GV. Asp155 contributes to the substrate binding site. Asp155 contacts a divalent metal cation. Asp157 contacts S-adenosyl-L-methionine. Positions 181 and 182 each coordinate a divalent metal cation. Asn186 provides a ligand contact to substrate.

The protein belongs to the class I-like SAM-binding methyltransferase superfamily. Cation-dependent O-methyltransferase family. CCoAMT subfamily. As to quaternary structure, monomer. Mg(2+) serves as cofactor. As to expression, mostly expressed in the bottom and middle parts of the stems.

The catalysed reaction is (E)-caffeoyl-CoA + S-adenosyl-L-methionine = (E)-feruloyl-CoA + S-adenosyl-L-homocysteine + H(+). Its pathway is aromatic compound metabolism; phenylpropanoid biosynthesis. Methylates caffeoyl-CoA to feruloyl-CoA and 5-hydroxyferuloyl-CoA to sinapoyl-CoA. Plays a role in the synthesis of feruloylated polysaccharides. Involved in the reinforcement of the plant cell wall. Also involved in the responding to wounding or pathogen challenge by the increased formation of cell wall-bound ferulic acid polymers. This is Caffeoyl-CoA O-methyltransferase 1 (CCOAOMT1) from Nicotiana tabacum (Common tobacco).